The primary structure comprises 286 residues: Putative sugar uptake protein lmo0176 (286 aa).

The next 8 membrane-spanning stretches (helical) occupy residues 4–26 (MIALIPALLWGTVPLIITKFGGS), 33–55 (GMTLGALTFAVIVFFFTDPVYTL), 114–136 (LRIILGFIALALIVGGIFLTSYA), 149–167 (GLITLFISACGYVGLVVLI), 177–194 (AILPQAIGMVISALIMTH), 207–226 (LLLTIPGVIWAAGNVAMVHA), 230–252 (VGVATGFSLSQLGVVISTIGGII), and 264–283 (LFVIVGVVLVVLGGILIGVA).

It belongs to the GRP transporter (TC 2.A.7.5) family.

The protein resides in the cell membrane. The polypeptide is Putative sugar uptake protein lmo0176 (Listeria monocytogenes serovar 1/2a (strain ATCC BAA-679 / EGD-e)).